The chain runs to 186 residues: M-phase phosphoprotein 6 homolog (186 aa).

N-acetylserine is present on S2. 2 disordered regions span residues K22–I47 and S95–K186. Positions S32–S42 are enriched in low complexity. S42 bears the Phosphoserine mark. Basic and acidic residues predominate over residues S122–F147. Position 150 is a phosphoserine (S150). Basic residues predominate over residues I168–K186.

This sequence belongs to the MPP6 family. In terms of assembly, associates with the RNA exosome complex.

The protein resides in the nucleus. Functionally, RNA-binding protein that associates with the RNA exosome complex. Involved in surveillance of pre-rRNAs and pre-mRNAs, and the degradation of cryptic non-coding RNAs (ncRNA) derived from intergenic regions and the ribosomal DNA spacer heterochromatin. In Saccharomyces cerevisiae (strain ATCC 204508 / S288c) (Baker's yeast), this protein is M-phase phosphoprotein 6 homolog (MPP6).